Consider the following 917-residue polypeptide: PAX3- and PAX7-binding protein 1 (917 aa).

The segment covering 1 to 11 (MFRKARRVNVR) has biased composition (basic residues). Disordered stretches follow at residues 1–123 (MFRK…FKVK), 143–205 (LEKS…GAFS), and 229–275 (RKKR…RIVF). The residue at position 16 (Ser16) is a Phosphoserine. Residues 16–28 (SEEEERERDEEQE) show a composition bias toward acidic residues. Composition is skewed to gly residues over residues 40–50 (EEAGPGGGDRA) and 73–85 (AEAG…GAEP). Lys149 participates in a covalent cross-link: Glycyl lysine isopeptide (Lys-Gly) (interchain with G-Cter in SUMO1); alternate. Residue Lys149 forms a Glycyl lysine isopeptide (Lys-Gly) (interchain with G-Cter in SUMO2); alternate linkage. Ser154, Ser155, and Ser158 each carry phosphoserine. Positions 161 to 172 (PLDKTGHVKDTN) are enriched in basic and acidic residues. The segment covering 183–193 (GEDEMDMESEK) has biased composition (acidic residues). Ser191 is modified (phosphoserine). A compositionally biased stretch (basic and acidic residues) spans 234–256 (MARELGDFTPHDNEPGKGRLVRE). Acidic residues predominate over residues 257-268 (DENDASDDEDDD). 2 positions are modified to phosphoserine: Ser262 and Ser295. Disordered regions lie at residues 362-381 (SSDA…TPSN) and 530-564 (AERE…EETS). Residues 378-558 (TPSNEMTPVT…MADHLEGLSS (181 aa)) form a necessary and sufficient for interaction with PAX7 region. The segment covering 542–554 (AREQTGKMADHLE) has biased composition (basic and acidic residues). Phosphoserine occurs at positions 557 and 558. Thr563 is subject to Phosphothreonine.

It belongs to the GCF family. Interacts with PAX3 and PAX7. Interacts with WDR5; associates with a histone methyltransferase (HMT) complex composed at least of RBBP5, ASH2L, SET1, SET2 and KMT2A/MLL1, KMT2D/MLL2, KMT2C/MLL3 and KMT2B/MLL4 through direct interaction with WDR5. Ubiquitous.

The protein localises to the nucleus. In terms of biological role, adapter protein linking the transcription factors PAX3 and PAX7 to the histone methylation machinery and involved in myogenesis. Associates with a histone methyltransferase complex that specifically mediates dimethylation and trimethylation of 'Lys-4' of histone H3. Mediates the recruitment of that complex to the transcription factors PAX3 and PAX7 on chromatin to regulate the expression of genes involved in muscle progenitor cells proliferation including ID3 and CDC20. The sequence is that of PAX3- and PAX7-binding protein 1 (PAXBP1) from Homo sapiens (Human).